We begin with the raw amino-acid sequence, 37 residues long: Cytochrome b6-f complex subunit 5 (37 aa).

A helical membrane pass occupies residues 5–25; the sequence is LLSGIVLGLIPITLVGLFVTA.

This sequence belongs to the PetG family. The 4 large subunits of the cytochrome b6-f complex are cytochrome b6, subunit IV (17 kDa polypeptide, PetD), cytochrome f and the Rieske protein, while the 4 small subunits are PetG, PetL, PetM and PetN. The complex functions as a dimer.

The protein resides in the plastid. Its subcellular location is the chloroplast thylakoid membrane. Functionally, component of the cytochrome b6-f complex, which mediates electron transfer between photosystem II (PSII) and photosystem I (PSI), cyclic electron flow around PSI, and state transitions. PetG is required for either the stability or assembly of the cytochrome b6-f complex. The chain is Cytochrome b6-f complex subunit 5 from Welwitschia mirabilis (Tree tumbo).